Reading from the N-terminus, the 1013-residue chain is Polyprotein of EF-Ts, chloroplastic (1013 aa).

The transit peptide at 1–43 (MLRELGRTATVKAHGRSVLRPVRGPAGRRQVAFTGVRPSVRVF) directs the protein to the chloroplast. The S1 motif 1 domain occupies 64 to 133 (GSEYEGTVTT…EKKRVSLELK (70 aa)). A compositionally biased stretch (acidic residues) spans 141–150 (SAEESDDIIT). A disordered region spans residues 141–163 (SAEESDDIITEPDREGADATDDD). In terms of domain architecture, S1 motif 2 spans 227 to 331 (MEEVTGKVAR…DGRGISLTHF (105 aa)). The disordered stretch occupies residues 772-798 (QAKAAAPAAPKKEEPKKEEPKKATVAV). Basic and acidic residues predominate over residues 781-793 (PKKEEPKKEEPKK).

This sequence belongs to the EF-Ts family. Component of the chloroplast ribosome 30S and 70S subunits, as well as polysomes. In terms of assembly, component of the chloroplast ribosome 70S subunit, and at low levels, present in polysomes. As to quaternary structure, associates transiently with chloroplast polysomes.

The protein resides in the plastid. The protein localises to the chloroplast. Its function is as follows. Associates with the EF-Tu.GDP complex and induces the exchange of GDP to GTP. It remains bound to the aminoacyl-tRNA.EF-Tu.GTP complex up to the GTP hydrolysis stage on the ribosome. In terms of biological role, binds to psbD and psbA mRNAs 5'-untranslated regions (UTRs) in vitro. The polypeptide is Polyprotein of EF-Ts, chloroplastic (Chlamydomonas reinhardtii (Chlamydomonas smithii)).